Consider the following 69-residue polypeptide: FXYD domain-containing ion transport regulator 11 (69 aa).

A signal peptide spans 1-22 (MSQLTELVLLTVFLALFSRAEA). The Extracellular portion of the chain corresponds to 23 to 33 (NPFVYNYEALR). The chain crosses the membrane as a helical span at residues 34-54 (IGGLVFTCVLVAGAVTALCWG). Topologically, residues 55-69 (QCKPKRKHDDDASKI) are cytoplasmic.

This sequence belongs to the FXYD family. In terms of tissue distribution, detected in adult gill and in larval skin at 2 days post-fertilization (at protein level). In adult gill, strong expression is found in the basal regions of the secondary lamellae.

It is found in the cell membrane. Its function is as follows. May modulate the activity of a sodium/potassium-transporting ATPase. This Danio rerio (Zebrafish) protein is FXYD domain-containing ion transport regulator 11.